The chain runs to 234 residues: Large ribosomal subunit protein uL1 (234 aa).

Belongs to the universal ribosomal protein uL1 family. In terms of assembly, part of the 50S ribosomal subunit.

Functionally, binds directly to 23S rRNA. The L1 stalk is quite mobile in the ribosome, and is involved in E site tRNA release. Its function is as follows. Protein L1 is also a translational repressor protein, it controls the translation of the L11 operon by binding to its mRNA. The protein is Large ribosomal subunit protein uL1 of Helicobacter acinonychis (strain Sheeba).